Here is a 46-residue protein sequence, read N- to C-terminus: Diuretic hormone (46 aa).

Ile46 is modified (isoleucine amide).

It belongs to the sauvagine/corticotropin-releasing factor/urotensin I family.

The protein resides in the secreted. Its function is as follows. Regulation of fluid secretion. Stimulates primary urine secretion by Malpighian tubules and causes a dose-dependent stimulation of cAMP levels in the tubules. In Locusta migratoria (Migratory locust), this protein is Diuretic hormone.